The primary structure comprises 89 residues: MSLSTEKKAAIVAEFGRDAKDTGSSEVQIALLTAQINHLQSHFATHKKDHHGRRGLLRMVSRRRKLLDYLKRTNLELYTSTIARLGLRR.

The protein belongs to the universal ribosomal protein uS15 family. In terms of assembly, part of the 30S ribosomal subunit. Forms a bridge to the 50S subunit in the 70S ribosome, contacting the 23S rRNA.

In terms of biological role, one of the primary rRNA binding proteins, it binds directly to 16S rRNA where it helps nucleate assembly of the platform of the 30S subunit by binding and bridging several RNA helices of the 16S rRNA. Functionally, forms an intersubunit bridge (bridge B4) with the 23S rRNA of the 50S subunit in the ribosome. The polypeptide is Small ribosomal subunit protein uS15 (Pasteurella multocida (strain Pm70)).